Reading from the N-terminus, the 921-residue chain is Protein translocase subunit SecA (921 aa).

ATP contacts are provided by residues Gln-86, 104–108 (GEGKT), and Asp-497. A compositionally biased stretch (low complexity) spans 829–838 (QQAPQQQPQQ). Positions 829–921 (QQAPQQQPQQ…CHGAIETQKA (93 aa)) are disordered. Positions 839–855 (VAPPPRPQPPQPAPQPP) are enriched in pro residues. Positions 901, 903, 912, and 913 each coordinate Zn(2+).

It belongs to the SecA family. Monomer and homodimer. Part of the essential Sec protein translocation apparatus which comprises SecA, SecYEG and auxiliary proteins SecDF-YajC and YidC. Zn(2+) serves as cofactor.

Its subcellular location is the cell inner membrane. The protein resides in the cytoplasm. It catalyses the reaction ATP + H2O + cellular proteinSide 1 = ADP + phosphate + cellular proteinSide 2.. Part of the Sec protein translocase complex. Interacts with the SecYEG preprotein conducting channel. Has a central role in coupling the hydrolysis of ATP to the transfer of proteins into and across the cell membrane, serving both as a receptor for the preprotein-SecB complex and as an ATP-driven molecular motor driving the stepwise translocation of polypeptide chains across the membrane. The chain is Protein translocase subunit SecA from Hyphomonas neptunium (strain ATCC 15444).